The chain runs to 566 residues: Ubiquitin carboxyl-terminal hydrolase 21 (566 aa).

2 stretches are compositionally biased toward basic and acidic residues: residues 1 to 14 and 58 to 70; these read MPQA…RTRE and PPDE…ELGR. Disordered regions lie at residues 1-103 and 146-169; these read MPQA…LPLP and PEPP…PPTL. 2 stretches are compositionally biased toward low complexity: residues 71–81 and 151–160; these read GRTSGSRPRGP and LRRSTSLRRL. Residues 134 to 152 carry the Nuclear export signal motif; that stretch reads ELGAALSRLALRPEPPTLR. The USP domain occupies 212-559; the sequence is VGLRNLGNTC…EGYVLFYQLM (348 aa). Catalysis depends on Cys-221, which acts as the Nucleophile. The tract at residues 324–349 is disordered; that stretch reads APPILASGPVPSPPRRGGGALHEEPE. Residues Cys-385, Cys-388, Cys-438, and Cys-441 each coordinate Zn(2+). His-519 acts as the Proton acceptor in catalysis.

Belongs to the peptidase C19 family. USP21 subfamily. As to quaternary structure, interacts with BEND3.

The protein localises to the cytoplasm. It localises to the nucleus. The catalysed reaction is Thiol-dependent hydrolysis of ester, thioester, amide, peptide and isopeptide bonds formed by the C-terminal Gly of ubiquitin (a 76-residue protein attached to proteins as an intracellular targeting signal).. Its function is as follows. Deubiquitinates histone H2A, a specific tag for epigenetic transcriptional repression, thereby acting as a coactivator. Deubiquitination of histone H2A releaves the repression of di- and trimethylation of histone H3 at 'Lys-4', resulting in regulation of transcriptional initiation. Regulates gene expression via histone H2A deubiquitination. Deubiquitinates BAZ2A/TIP5 leading to its stabilization. Also capable of removing NEDD8 from NEDD8 conjugates but has no effect on Sentrin-1 conjugates. Also acts as a negative regulator of the ribosome quality control (RQC) by mediating deubiquitination of 40S ribosomal proteins RPS10/eS10 and RPS20/uS10, thereby antagonizing ZNF598-mediated 40S ubiquitination. The protein is Ubiquitin carboxyl-terminal hydrolase 21 of Mus musculus (Mouse).